The primary structure comprises 141 residues: Large ribosomal subunit protein uL11 (141 aa).

Belongs to the universal ribosomal protein uL11 family. In terms of assembly, part of the ribosomal stalk of the 50S ribosomal subunit. Interacts with L10 and the large rRNA to form the base of the stalk. L10 forms an elongated spine to which L12 dimers bind in a sequential fashion forming a multimeric L10(L12)X complex. Post-translationally, one or more lysine residues are methylated.

Functionally, forms part of the ribosomal stalk which helps the ribosome interact with GTP-bound translation factors. The chain is Large ribosomal subunit protein uL11 from Streptococcus pneumoniae (strain Hungary19A-6).